The following is a 363-amino-acid chain: Biotin synthase (363 aa).

S13, S14, and S17 each carry phosphoserine. The 223-residue stretch at 54-276 folds into the Radical SAM core domain; the sequence is KKVQQCTLLS…IATARICMPK (223 aa). Positions 69, 73, and 76 each coordinate [4Fe-4S] cluster. [2Fe-2S] cluster is bound by residues C113, C146, C206, and R280. The interval 337-363 is disordered; sequence EYGTSTEGEDGTFTLPPKERLAPSPSL.

This sequence belongs to the radical SAM superfamily. Biotin synthase family. The cofactor is [4Fe-4S] cluster. [2Fe-2S] cluster serves as cofactor.

The enzyme catalyses (4R,5S)-dethiobiotin + (sulfur carrier)-SH + 2 reduced [2Fe-2S]-[ferredoxin] + 2 S-adenosyl-L-methionine = (sulfur carrier)-H + biotin + 2 5'-deoxyadenosine + 2 L-methionine + 2 oxidized [2Fe-2S]-[ferredoxin]. It participates in cofactor biosynthesis; biotin biosynthesis; biotin from 7,8-diaminononanoate: step 2/2. Catalyzes the last step of biotin biosynthesis, the conversion of dethiobiotin to biotin. The sequence is that of Biotin synthase (bio2) from Schizosaccharomyces pombe (strain 972 / ATCC 24843) (Fission yeast).